The chain runs to 232 residues: tRNA1(Val) (adenine(37)-N6)-methyltransferase (232 aa).

Belongs to the methyltransferase superfamily. tRNA (adenine-N(6)-)-methyltransferase family.

The protein resides in the cytoplasm. It catalyses the reaction adenosine(37) in tRNA1(Val) + S-adenosyl-L-methionine = N(6)-methyladenosine(37) in tRNA1(Val) + S-adenosyl-L-homocysteine + H(+). In terms of biological role, specifically methylates the adenine in position 37 of tRNA(1)(Val) (anticodon cmo5UAC). This is tRNA1(Val) (adenine(37)-N6)-methyltransferase from Haemophilus influenzae (strain ATCC 51907 / DSM 11121 / KW20 / Rd).